The primary structure comprises 43 residues: Hemolysin H3C (43 aa).

The residue at position 1 (M1) is an N-formylmethionine.

It belongs to the staphylococcal hemolytic protein family.

The protein resides in the secreted. Virulence factor. Causes hemolysis of erythrocytes from sheep (HD(50)=2.63 mM), rabbit (HD(50)=2.37 mM), guinea pig (HD(50)=1.98 mM), dog (HD(50)=1.02 mM) and human (HD(50)=2.07 mM). Acts synergistically with beta-hemolysins from S.aureus ATCC 25923. Cytotoxic towards human dermal fibroblasts. This chain is Hemolysin H3C, found in Staphylococcus cohnii subsp. cohnii.